We begin with the raw amino-acid sequence, 157 residues long: Small ribosomal subunit protein uS7cz/uS7cy (157 aa).

It belongs to the universal ribosomal protein uS7 family. In terms of assembly, part of the 30S ribosomal subunit.

The protein resides in the plastid. Its subcellular location is the chloroplast. Its function is as follows. One of the primary rRNA binding proteins, it binds directly to 16S rRNA where it nucleates assembly of the head domain of the 30S subunit. The polypeptide is Small ribosomal subunit protein uS7cz/uS7cy (rps7-A) (Welwitschia mirabilis (Tree tumbo)).